The primary structure comprises 111 residues: Small ribosomal subunit protein bS16 (111 aa).

It belongs to the bacterial ribosomal protein bS16 family.

The polypeptide is Small ribosomal subunit protein bS16 (Rickettsia africae (strain ESF-5)).